The sequence spans 322 residues: Phospho-N-acetylmuramoyl-pentapeptide-transferase (322 aa).

Helical transmembrane passes span 6 to 26, 54 to 74, 82 to 102, 122 to 142, 145 to 165, 176 to 196, 200 to 220, 227 to 247, 255 to 275, and 302 to 322; these read ASCI…PLLI, TMGG…VTAW, VWIL…DDGI, IIIA…FGLY, FAGV…WLVG, LDGL…YIAF, NFAI…FFIF, IFMG…VSIM, LLVG…VISF, and VDIV…AIWG.

This sequence belongs to the glycosyltransferase 4 family. MraY subfamily. Requires Mg(2+) as cofactor.

The protein localises to the cell membrane. The catalysed reaction is UDP-N-acetyl-alpha-D-muramoyl-L-alanyl-gamma-D-glutamyl-L-lysyl-D-alanyl-D-alanine + di-trans,octa-cis-undecaprenyl phosphate = Mur2Ac(oyl-L-Ala-gamma-D-Glu-L-Lys-D-Ala-D-Ala)-di-trans,octa-cis-undecaprenyl diphosphate + UMP. It functions in the pathway cell wall biogenesis; peptidoglycan biosynthesis. Its function is as follows. Catalyzes the initial step of the lipid cycle reactions in the biosynthesis of the cell wall peptidoglycan: transfers peptidoglycan precursor phospho-MurNAc-pentapeptide from UDP-MurNAc-pentapeptide onto the lipid carrier undecaprenyl phosphate, yielding undecaprenyl-pyrophosphoryl-MurNAc-pentapeptide, known as lipid I. The polypeptide is Phospho-N-acetylmuramoyl-pentapeptide-transferase (Lactobacillus helveticus (strain DPC 4571)).